We begin with the raw amino-acid sequence, 144 residues long: Putative pre-16S rRNA nuclease (144 aa).

Belongs to the YqgF nuclease family.

It localises to the cytoplasm. Its function is as follows. Could be a nuclease involved in processing of the 5'-end of pre-16S rRNA. This is Putative pre-16S rRNA nuclease from Lactiplantibacillus plantarum (strain ATCC BAA-793 / NCIMB 8826 / WCFS1) (Lactobacillus plantarum).